The following is a 564-amino-acid chain: MFS-type efflux transporter ffsH (564 aa).

Residues 1–18 (MSEAEKKASQDAQHKEPM) show a composition bias toward basic and acidic residues. The segment at 1–37 (MSEAEKKASQDAQHKEPMADSETQLDSDSAPSSQAEK) is disordered. Positions 21 to 35 (SETQLDSDSAPSSQA) are enriched in polar residues. 4 helical membrane passes run 43-63 (YPLS…ISAM), 98-118 (YVMI…GGAN), 131-151 (GIGA…LVPM), and 157-177 (FIGL…IIGG). N-linked (GlcNAc...) asparagine glycosylation occurs at asparagine 182. 9 helical membrane-spanning segments follow: residues 187-207 (WVFY…VLFL), 226-246 (VVGN…LTYG), 254-274 (AANI…FIAW), 300-320 (FFIS…YPVY), 334-354 (VHLL…GGLV), 362-382 (PIHM…SVLT), 389-409 (AWAV…STTL), 427-447 (TWAY…AAIF), and 502-522 (VWLV…FEKE). Positions 540–564 (GDAKGDVERGEGQNDSREGGQNENV) are disordered. N-linked (GlcNAc...) asparagine glycosylation occurs at asparagine 553.

The protein belongs to the major facilitator superfamily.

It is found in the cell membrane. Its function is as follows. MFS-type efflux transporter; part of the gene cluster that mediates the biosynthesis of the cytotoxic leucine-containing cytochalasans, including aspochalasin C, aspochalasin E, TMC-169, flavichalasine F, aspergillin PZ, aspochalasin M and flavichalasine G. FfsH might be involved in the excretion of cytochalasans. This chain is MFS-type efflux transporter ffsH, found in Aspergillus flavipes.